The sequence spans 405 residues: L-rhamnonate dehydratase (405 aa).

Positions 33 and 59 each coordinate substrate. The Mg(2+) site is built by Asp-226, Glu-252, and Glu-280. His-329 acts as the Proton acceptor in catalysis. Glu-349 provides a ligand contact to substrate.

Belongs to the mandelate racemase/muconate lactonizing enzyme family. RhamD subfamily. As to quaternary structure, homooctamer; tetramer of dimers. It depends on Mg(2+) as a cofactor.

It catalyses the reaction L-rhamnonate = 2-dehydro-3-deoxy-L-rhamnonate + H2O. Its function is as follows. Catalyzes the dehydration of L-rhamnonate to 2-keto-3-deoxy-L-rhamnonate (KDR). Can also dehydrate L-lyxonate and L-mannonate, although less efficiently, but not 2-keto-4-hydroxyheptane-1,7-dioate. The polypeptide is L-rhamnonate dehydratase (rhmD) (Salmonella typhimurium (strain LT2 / SGSC1412 / ATCC 700720)).